The sequence spans 409 residues: NADH-quinone oxidoreductase subunit D (409 aa).

It belongs to the complex I 49 kDa subunit family. NDH-1 is composed of 14 different subunits. Subunits NuoB, C, D, E, F, and G constitute the peripheral sector of the complex.

It is found in the cell inner membrane. It carries out the reaction a quinone + NADH + 5 H(+)(in) = a quinol + NAD(+) + 4 H(+)(out). In terms of biological role, NDH-1 shuttles electrons from NADH, via FMN and iron-sulfur (Fe-S) centers, to quinones in the respiratory chain. The immediate electron acceptor for the enzyme in this species is believed to be ubiquinone. Couples the redox reaction to proton translocation (for every two electrons transferred, four hydrogen ions are translocated across the cytoplasmic membrane), and thus conserves the redox energy in a proton gradient. This Campylobacter curvus (strain 525.92) protein is NADH-quinone oxidoreductase subunit D.